The following is a 407-amino-acid chain: Imidazolonepropionase (407 aa).

2 residues coordinate Fe(3+): His-72 and His-74. Zn(2+) is bound by residues His-72 and His-74. Arg-81, Tyr-144, and His-177 together coordinate 4-imidazolone-5-propanoate. Tyr-144 is an N-formimidoyl-L-glutamate binding site. Fe(3+) is bound at residue His-242. Residue His-242 participates in Zn(2+) binding. Residue Gln-245 coordinates 4-imidazolone-5-propanoate. Residue Asp-317 participates in Fe(3+) binding. A Zn(2+)-binding site is contributed by Asp-317. N-formimidoyl-L-glutamate is bound by residues Asn-319 and Gly-321. Thr-322 contacts 4-imidazolone-5-propanoate.

It belongs to the metallo-dependent hydrolases superfamily. HutI family. It depends on Zn(2+) as a cofactor. Fe(3+) is required as a cofactor.

It localises to the cytoplasm. The enzyme catalyses 4-imidazolone-5-propanoate + H2O = N-formimidoyl-L-glutamate. The protein operates within amino-acid degradation; L-histidine degradation into L-glutamate; N-formimidoyl-L-glutamate from L-histidine: step 3/3. Catalyzes the hydrolytic cleavage of the carbon-nitrogen bond in imidazolone-5-propanoate to yield N-formimidoyl-L-glutamate. It is the third step in the universal histidine degradation pathway. This is Imidazolonepropionase from Rhizobium rhizogenes (Agrobacterium rhizogenes).